Consider the following 872-residue polypeptide: Valine--tRNA ligase (872 aa).

Positions Pro49 to His59 match the 'HIGH' region motif. Residues Lys531–Ser535 carry the 'KMSKS' region motif. Lys534 lines the ATP pocket. Residues Pro810–Gln871 are a coiled coil.

It belongs to the class-I aminoacyl-tRNA synthetase family. ValS type 1 subfamily. As to quaternary structure, monomer.

Its subcellular location is the cytoplasm. It catalyses the reaction tRNA(Val) + L-valine + ATP = L-valyl-tRNA(Val) + AMP + diphosphate. Catalyzes the attachment of valine to tRNA(Val). As ValRS can inadvertently accommodate and process structurally similar amino acids such as threonine, to avoid such errors, it has a 'posttransfer' editing activity that hydrolyzes mischarged Thr-tRNA(Val) in a tRNA-dependent manner. The polypeptide is Valine--tRNA ligase (Helicobacter pylori (strain J99 / ATCC 700824) (Campylobacter pylori J99)).